The sequence spans 74 residues: Putative membrane protein insertion efficiency factor (74 aa).

The protein belongs to the UPF0161 family.

It is found in the cell inner membrane. Its function is as follows. Could be involved in insertion of integral membrane proteins into the membrane. The protein is Putative membrane protein insertion efficiency factor of Blochmanniella floridana.